A 119-amino-acid polypeptide reads, in one-letter code: Ribonuclease P protein component (119 aa).

Belongs to the RnpA family. Consists of a catalytic RNA component (M1 or rnpB) and a protein subunit.

It catalyses the reaction Endonucleolytic cleavage of RNA, removing 5'-extranucleotides from tRNA precursor.. In terms of biological role, RNaseP catalyzes the removal of the 5'-leader sequence from pre-tRNA to produce the mature 5'-terminus. It can also cleave other RNA substrates such as 4.5S RNA. The protein component plays an auxiliary but essential role in vivo by binding to the 5'-leader sequence and broadening the substrate specificity of the ribozyme. The chain is Ribonuclease P protein component from Bacillus cereus (strain ATCC 14579 / DSM 31 / CCUG 7414 / JCM 2152 / NBRC 15305 / NCIMB 9373 / NCTC 2599 / NRRL B-3711).